The sequence spans 133 residues: Salivary cystatin-L (133 aa).

The first 19 residues, 1 to 19 (MTSSFALVLLLGGVAVCVA), serve as a signal peptide directing secretion. Positions 30-117 (ANHQANPEFL…HRTCTTVVFE (88 aa)) constitute a Cystatin domain. Disulfide bonds link Cys89–Cys100 and Cys111–Cys130.

It belongs to the cystatin family. Monomer. Can form homodimers in vitro, but probably not in vivo. Homodimers are predicted to be inactive; dimerization disrupts the interaction with target proteases.

Its subcellular location is the secreted. Functionally, inhibitor of cysteine proteinases. Inhibits host immune responses via its inhibition of host cathepsins. Contributes to the suppression of the host's immune response to tick salivary proteins and is important for successful feeding on hosts. Inhibits differentiation of host dendritic cells. Inhibits proliferation of host T-cells in response to antigen stimulus. Down-regulates TLR2-mediated host responses to infection by B.burgdorferi and the production of the chemokine CCL3 by host dendritic cells. Down-regulates host responses to infection by B.burgdorferi and the production of IFNB1 by host dendritic cells. Down-regulates IL1B production by host mast cells, and this then leads to impaired activation of IL1R1, resulting in decreased IL9 production. Inhibits host inflammatory reactions and recruitment of host neutrophils. Inhibits papain and cathepsin L (CTSL) (in vitro). Inhibits cathepsin S (CTSS) (in vitro). Inhibits CTSV and CTSC, but to a lesser degree (in vitro). The protein is Salivary cystatin-L of Ixodes scapularis (Black-legged tick).